Reading from the N-terminus, the 123-residue chain is Ribosome-binding factor A (123 aa).

It belongs to the RbfA family. In terms of assembly, monomer. Binds 30S ribosomal subunits, but not 50S ribosomal subunits or 70S ribosomes.

It localises to the cytoplasm. One of several proteins that assist in the late maturation steps of the functional core of the 30S ribosomal subunit. Associates with free 30S ribosomal subunits (but not with 30S subunits that are part of 70S ribosomes or polysomes). Required for efficient processing of 16S rRNA. May interact with the 5'-terminal helix region of 16S rRNA. In Chlamydia trachomatis serovar A (strain ATCC VR-571B / DSM 19440 / HAR-13), this protein is Ribosome-binding factor A.